Here is a 410-residue protein sequence, read N- to C-terminus: Putative transposase Rv3428c (410 aa).

The 181-residue stretch at 40 to 220 (VPRGPVDAGS…QPLRMFEAVE (181 aa)) folds into the Integrase catalytic domain. The tract at residues 390–410 (AANEPTTSSPASTAGGVPARP) is disordered.

Belongs to the transposase IS21/IS408/IS1162 family.

This Mycobacterium tuberculosis (strain ATCC 25618 / H37Rv) protein is Putative transposase Rv3428c.